The following is a 62-amino-acid chain: Large ribosomal subunit protein bL28 (62 aa).

The segment at 1 to 28 is disordered; that stretch reads MARKCVITGRKSRSGNSRSHAMNASKRT. Residues 14–26 are compositionally biased toward polar residues; the sequence is SGNSRSHAMNASK.

This sequence belongs to the bacterial ribosomal protein bL28 family.

The protein is Large ribosomal subunit protein bL28 of Bacillus licheniformis (strain ATCC 14580 / DSM 13 / JCM 2505 / CCUG 7422 / NBRC 12200 / NCIMB 9375 / NCTC 10341 / NRRL NRS-1264 / Gibson 46).